Here is a 369-residue protein sequence, read N- to C-terminus: Xylene/toluene monooxygenase hydroxylase component XylM (369 aa).

3 helical membrane-spanning segments follow: residues 8-28, 60-80, and 91-111; these read LIPV…YWVW, LTQY…VFGV, and LQVA…TLPV. His113, His117, His143, His147, and His148 together coordinate Fe cation. The chain crosses the membrane as a helical span at residues 207–227; the sequence is VALLLALPGLVSYLGGPALGL. Fe cation contacts are provided by His282, His285, and His286. A helical transmembrane segment spans residues 305-325; the sequence is MPSLFVCFLLGLIPPLWFALI.

This sequence belongs to the fatty acid desaturase type 1 family. AlkB subfamily. As to quaternary structure, the xylene/toluene monooxygenase is composed of two subunits: the electron transfer component XylA and the hydroxylase component XylM. Fe(2+) is required as a cofactor.

Its subcellular location is the cell inner membrane. It catalyses the reaction m-xylene + 2 reduced [2Fe-2S]-[ferredoxin] + O2 + 2 H(+) = 3-methylbenzyl alcohol + 2 oxidized [2Fe-2S]-[ferredoxin] + H2O. The enzyme catalyses p-xylene + 2 reduced [2Fe-2S]-[ferredoxin] + O2 + 2 H(+) = 4-methylbenzyl alcohol + 2 oxidized [2Fe-2S]-[ferredoxin] + H2O. It carries out the reaction toluene + 2 reduced [2Fe-2S]-[ferredoxin] + O2 + 2 H(+) = benzyl alcohol + 2 oxidized [2Fe-2S]-[ferredoxin] + H2O. Functionally, component of a monooxygenase that catalyzes the first step in the degradation of xylenes and toluenes. XylM catalyzes the hydroxylation of the methyl side chain of xylenes and toluenes. The electrons are provided by the electron transfer component XylA. The best substrates are m-xylene and p-xylene, followed by toluene. Shows weak activity with o-xylene. In vitro, is also active with substituted compounds, such as chlorotoluenes. Cannot use benzyl alcohol. The protein is Xylene/toluene monooxygenase hydroxylase component XylM of Pseudomonas putida (Arthrobacter siderocapsulatus).